The sequence spans 167 residues: Translation initiation factor IF-3 (167 aa).

Belongs to the IF-3 family. Monomer.

It localises to the cytoplasm. In terms of biological role, IF-3 binds to the 30S ribosomal subunit and shifts the equilibrium between 70S ribosomes and their 50S and 30S subunits in favor of the free subunits, thus enhancing the availability of 30S subunits on which protein synthesis initiation begins. The protein is Translation initiation factor IF-3 of Shouchella clausii (strain KSM-K16) (Alkalihalobacillus clausii).